Reading from the N-terminus, the 720-residue chain is Beta-glucan synthesis-associated protein KRE6 (720 aa).

Composition is skewed to polar residues over residues 1-17, 31-51, and 69-90; these read MPLR…STNL, LSSS…NAGL, and SLSS…HDNS. Residues 1–90 are disordered; sequence MPLRNLTETH…SDSSLLHDNS (90 aa). The Cytoplasmic portion of the chain corresponds to 1 to 252; the sequence is MPLRNLTETH…KYMDKRSASG (252 aa). Phosphoserine is present on residues serine 81, serine 116, serine 133, serine 134, serine 136, and serine 139. Disordered stretches follow at residues 117-142 and 167-189; these read TAND…SNLS and QLNH…SFSS. Over residues 133–142 the composition is skewed to low complexity; sequence SSPSLNSNLS. The helical; Signal-anchor for type II membrane protein transmembrane segment at 253–273 threads the bilayer; it reads LAGVLLLFLAAIFIFIVLPAL. Residues 274–720 are Lumenal-facing; it reads TFTGAIDHES…CTSSKFKLSS (447 aa). The GH16 domain occupies 289 to 664; that stretch reads TYLTQYQYPQ…YVRIYQPSNA (376 aa). Residues asparagine 374, asparagine 461, asparagine 538, asparagine 563, and asparagine 691 are each glycosylated (N-linked (GlcNAc...) asparagine).

It belongs to the SKN1/KRE6 family. In terms of assembly, the cytoplasmic domain interacts with the actin patch assembly proteins LAS17 and SLA1. Interacts with KEG1.

The protein resides in the golgi apparatus membrane. Its function is as follows. Involved in the synthesis of (1-&gt;6)- and (1-&gt;3)-beta-D-glucan polymers of the yeast cell wall in vivo. It is required for full activity of beta-glucan synthase in vitro. May be involved in the maturation and transport of cell wall proteins (CWP) to the cell wall. May act as a transglucosidase and contribute to the construction of a protein-bound glucan-structure that acts as an acceptor site for the addition of (1-&gt;6)-beta-D-glucan at the cell surface. The sequence is that of Beta-glucan synthesis-associated protein KRE6 (KRE6) from Saccharomyces cerevisiae (strain ATCC 204508 / S288c) (Baker's yeast).